A 278-amino-acid polypeptide reads, in one-letter code: MATH domain and coiled-coil domain-containing protein At1g31400 (278 aa).

The MATH domain maps to 6 to 131; sequence EKRITWTIKN…SGQVKIVAEV (126 aa). Residues 232-267 are a coiled coil; the sequence is KLDWLEKKLKEVGKTRMQQLEQNLKDLKESLCWSSD.

The sequence is that of MATH domain and coiled-coil domain-containing protein At1g31400 from Arabidopsis thaliana (Mouse-ear cress).